Here is a 67-residue protein sequence, read N- to C-terminus: MNVTVMFLVLLLLTMPLTDGFNIRATNGGELFGPVQRDAGNVLDHGFQRRRECPPRCPTSHCNAGTC.

The signal sequence occupies residues 1–20 (MNVTVMFLVLLLLTMPLTDG). Residues 21–48 (FNIRATNGGELFGPVQRDAGNVLDHGFQ) constitute a propeptide that is removed on maturation.

It belongs to the conotoxin L superfamily. Post-translationally, contains 2 disulfide bonds. Expressed by the venom duct.

The protein resides in the secreted. Functionally, increases calcium current amplitude through Cav1.2/Cav1.3 channels in rat pancreatic beta-cells, which is a prerequisite for eliciting insulin secretion. Stimulates insulin secretion in NIT-1 insulinoma cell lines. In vivo, significantly decreases mice blood glucose levels as of 45 minutes after treatment, similarly to insulin treatment. Has a potential therapeutic use in endocrinal pathologies such as early stages of type 2 diabetes where the pancreas's capability to produce insulin is still effective. This is Conotoxin Cl14.2b from Californiconus californicus (California cone).